The primary structure comprises 429 residues: Protein arginine N-methyltransferase 2 (429 aa).

Disordered stretches follow at residues 41–76 and 137–180; these read PEVA…EDHE and ALDS…EETP. Over residues 137–163 the composition is skewed to acidic residues; that stretch reads ALDSDDEDDEEMAEGEEAQAEDGEEAP. The segment covering 164-174 has biased composition (low complexity); it reads ELVAAEEATQT. The 240-residue stretch at 190–429 folds into the RMT2 domain; it reads LEEQVTSDKY…YRLPVCTFLG (240 aa). Residues Y199, M228, 250-255, 271-273, 308-309, and D328 contribute to the S-adenosyl-L-methionine site; these read FGMGII, EAH, and WQ.

Belongs to the class I-like SAM-binding methyltransferase superfamily. RMT2 methyltransferase family. As to quaternary structure, monomer.

It localises to the cytoplasm. The protein resides in the nucleus. S-adenosyl-L-methionine-dependent protein-arginine N-methyltransferase that methylates the delta-nitrogen atom of arginine residues to form N5-methylarginine (type IV) in target proteins. Monomethylates ribosomal protein L12. The sequence is that of Protein arginine N-methyltransferase 2 from Neurospora crassa (strain ATCC 24698 / 74-OR23-1A / CBS 708.71 / DSM 1257 / FGSC 987).